A 166-amino-acid chain; its full sequence is NADH-quinone oxidoreductase subunit I (166 aa).

4Fe-4S ferredoxin-type domains are found at residues 57–87 and 97–126; these read LRRY…IESE and TRYD…VTPI. The [4Fe-4S] cluster site is built by Cys67, Cys70, Cys73, Cys77, Cys106, Cys109, Cys112, and Cys116.

The protein belongs to the complex I 23 kDa subunit family. In terms of assembly, NDH-1 is composed of 14 different subunits. Subunits NuoA, H, J, K, L, M, N constitute the membrane sector of the complex. [4Fe-4S] cluster is required as a cofactor.

Its subcellular location is the cell inner membrane. It carries out the reaction a quinone + NADH + 5 H(+)(in) = a quinol + NAD(+) + 4 H(+)(out). In terms of biological role, NDH-1 shuttles electrons from NADH, via FMN and iron-sulfur (Fe-S) centers, to quinones in the respiratory chain. The immediate electron acceptor for the enzyme in this species is believed to be ubiquinone. Couples the redox reaction to proton translocation (for every two electrons transferred, four hydrogen ions are translocated across the cytoplasmic membrane), and thus conserves the redox energy in a proton gradient. The protein is NADH-quinone oxidoreductase subunit I of Legionella pneumophila (strain Paris).